The primary structure comprises 149 residues: Large ribosomal subunit protein bL9 (149 aa).

This sequence belongs to the bacterial ribosomal protein bL9 family.

Its function is as follows. Binds to the 23S rRNA. The protein is Large ribosomal subunit protein bL9 of Mycoplasma pneumoniae (strain ATCC 29342 / M129 / Subtype 1) (Mycoplasmoides pneumoniae).